The following is a 675-amino-acid chain: Pesticidal crystal protein Cry10Aa (675 aa).

Belongs to the delta endotoxin family.

Its function is as follows. Promotes colloidosmotic lysis by binding to the midgut epithelial cells of mosquitos. Active on Aedes aegypti. This is Pesticidal crystal protein Cry10Aa (cry10Aa) from Bacillus thuringiensis subsp. israelensis.